The chain runs to 373 residues: Protein CAF40 (373 aa).

The segment at 1 to 91 is disordered; the sequence is MFSAQKPIYG…ANATRNNPNM (91 aa). Residues 11 to 22 show a composition bias toward gly residues; that stretch reads NGAGVNMGGGGP. Low complexity predominate over residues 50–88; it reads GGPMLMGNTPNNNNSNENGENNGNNGNNGGNDANATRNN.

It belongs to the CNOT9 family. As to quaternary structure, subunit of the 1.0 MDa CCR4-NOT core complex that contains CCR4, CAF1, NOT1, NOT2, NOT3, NOT4, NOT5, CAF40 and CAF130. In the complex interacts with NOT1. The core complex probably is part of a less characterized 1.9 MDa CCR4-NOT complex.

The protein resides in the cytoplasm. Its subcellular location is the nucleus. In terms of biological role, acts as a component of the CCR4-NOT core complex, which in the nucleus seems to be a general transcription factor, and in the cytoplasm the major mRNA deadenylase involved in mRNA turnover. This chain is Protein CAF40 (CAF40), found in Saccharomyces cerevisiae (strain ATCC 204508 / S288c) (Baker's yeast).